Consider the following 292-residue polypeptide: 4-diphosphocytidyl-2-C-methyl-D-erythritol kinase (292 aa).

Residue Lys-11 is part of the active site. Residue 95–105 (PVSAGLAGGSS) coordinates ATP. Residue Asp-137 is part of the active site.

It belongs to the GHMP kinase family. IspE subfamily.

It catalyses the reaction 4-CDP-2-C-methyl-D-erythritol + ATP = 4-CDP-2-C-methyl-D-erythritol 2-phosphate + ADP + H(+). The protein operates within isoprenoid biosynthesis; isopentenyl diphosphate biosynthesis via DXP pathway; isopentenyl diphosphate from 1-deoxy-D-xylulose 5-phosphate: step 3/6. In terms of biological role, catalyzes the phosphorylation of the position 2 hydroxy group of 4-diphosphocytidyl-2C-methyl-D-erythritol. This Alkaliphilus oremlandii (strain OhILAs) (Clostridium oremlandii (strain OhILAs)) protein is 4-diphosphocytidyl-2-C-methyl-D-erythritol kinase.